Reading from the N-terminus, the 170-residue chain is Cathelicidin antimicrobial peptide (170 aa).

An N-terminal signal peptide occupies residues 1-30 (MKTQRDSPSLGRWSLVLLLLGLVMPLAIVA). Positions 31 to 131 (QVLSYQEAVL…DISCDKDNRR (101 aa)) are cleaved as a propeptide — cathelin-like domain (CLD). 2 disulfide bridges follow: Cys-86/Cys-97 and Cys-108/Cys-125. An active core region spans residues 150–162 (FKRIVQRIKDFLQ).

Belongs to the cathelicidin family. As to quaternary structure, monomer, homodimer or homotrimer (in vitro). Oligomerizes as tetra- or hexamer in solution (in vitro). Proteolytically cleaved by proteinase PRTN3 into antibacterial peptide LL-37. Proteolytically cleaved by cathepsin CTSG and neutrophil elastase ELANE. In terms of processing, resistant to proteolytic degradation in solution, and when bound to both zwitterionic (mimicking mammalian membranes) and negatively charged membranes (mimicking bacterial membranes). Post-translationally, after secretion onto the skin surface, the CAMP gene product is processed by a serine protease-dependent mechanism into multiple novel antimicrobial peptides distinct from and shorter than cathelicidin LL-37. These peptides show enhanced antimicrobial action, acquiring the ability to kill skin pathogens such as S.aureus, E.coli and C.albicans. These peptides have lost the ability to stimulate CXCL8/IL8 release from keratinocytes. The peptides act synergistically, killing bacteria at lower concentrations when present together, and maintain activity at increased salt condition.

The protein localises to the secreted. It is found in the vesicle. Its function is as follows. Antimicrobial protein that is an integral component of the innate immune system. Binds to bacterial lipopolysaccharides (LPS). Acts via neutrophil N-formyl peptide receptors to enhance the release of CXCL2. Postsecretory processing generates multiple cathelicidin antimicrobial peptides with various lengths which act as a topical antimicrobial defense in sweat on skin. The unprocessed precursor form, cathelicidin antimicrobial peptide, inhibits the growth of Gram-negative E.coli and E.aerogenes with efficiencies comparable to that of the mature peptide LL-37 (in vitro). Antimicrobial peptide that is an integral component of the innate immune system. Binds to bacterial lipopolysaccharides (LPS). Causes membrane permeabilization by forming transmembrane pores (in vitro). Causes lysis of E.coli. Exhibits antimicrobial activity against Gram-negative bacteria such as P.aeruginosa, S.typhimurium, E.aerogenes, E.coli and P.syringae, Gram-positive bacteria such as L.monocytogenes, S.epidermidis, S.pyogenes and S.aureus, as well as vancomycin-resistant enterococci (in vitro). Exhibits antimicrobial activity against methicillin-resistant S.aureus, P.mirabilis, and C.albicans in low-salt media, but not in media containing 100 mM NaCl (in vitro). Forms chiral supramolecular assemblies with quinolone signal (PQS) molecules of P.aeruginosa, which may lead to interference of bacterial quorum signaling and perturbance of bacterial biofilm formation. May form supramolecular fiber-like assemblies on bacterial membranes. Induces cytokine and chemokine producation as well as TNF/TNFA and CSF2/GMCSF production in normal human keratinocytes. Exhibits hemolytic activity against red blood cells. Functionally, exhibits antimicrobial activity against E.coli and B.megaterium (in vitro). The protein is Cathelicidin antimicrobial peptide of Nomascus concolor (Black crested gibbon).